The sequence spans 953 residues: Serine/threonine-protein kinase ppk30 (953 aa).

The 270-residue stretch at 57–326 (VIIQRYLSEG…IYQTLKEIME (270 aa)) folds into the Protein kinase domain. ATP contacts are provided by residues 63 to 71 (LSEGGFSHV) and lysine 85. Aspartate 187 (proton acceptor) is an active-site residue. Disordered regions lie at residues 343-402 (ASTY…PSVS), 427-451 (SPIPATKSYSATIQTPRSPSLRRAD), 538-606 (RFLP…NRMN), 641-669 (RKEPFTPAVPSAKSGLKKDQSSEVANKDV), 748-791 (STSQ…RPIG), and 864-953 (RKSC…ESLE). 3 stretches are compositionally biased toward polar residues: residues 355–369 (RTPSGSLTPLSSRPA), 378–402 (TVQTTSSNVPPVNRPSLKSKSPSVS), and 433–444 (KSYSATIQTPRS). A compositionally biased stretch (low complexity) spans 547-557 (PSEFSSSVGSK). The segment covering 558-575 (QNLSMDIPSVQNVSTKQK) has biased composition (polar residues). A compositionally biased stretch (basic and acidic residues) spans 656-669 (LKKDQSSEVANKDV). Residues 748 to 766 (STSQVSHTQRLQQSISTSL) are compositionally biased toward polar residues. Basic and acidic residues-rich tracts occupy residues 767-778 (ERVKSNTKKESN), 865-884 (KSCETQRSRKSHEGSNDLER), and 937-953 (PHIERLNLFHTKSESLE). Residues serine 872 and serine 875 each carry the phosphoserine modification.

Belongs to the protein kinase superfamily. Ser/Thr protein kinase family.

It localises to the cytoplasm. It catalyses the reaction L-seryl-[protein] + ATP = O-phospho-L-seryl-[protein] + ADP + H(+). It carries out the reaction L-threonyl-[protein] + ATP = O-phospho-L-threonyl-[protein] + ADP + H(+). The protein is Serine/threonine-protein kinase ppk30 (ppk30) of Schizosaccharomyces pombe (strain 972 / ATCC 24843) (Fission yeast).